The chain runs to 474 residues: tRNA-2-methylthio-N(6)-dimethylallyladenosine synthase (474 aa).

Positions 3-120 (KKLHIKTWGC…LPDMIEQVRR (118 aa)) constitute an MTTase N-terminal domain. [4Fe-4S] cluster is bound by residues Cys12, Cys49, Cys83, Cys157, Cys161, and Cys164. A Radical SAM core domain is found at 143–375 (RAEGPTAFVS…QDRITQQAMR (233 aa)). One can recognise a TRAM domain in the interval 378–441 (RHMMGTVQRI…TNSLRGKFIR (64 aa)).

The protein belongs to the methylthiotransferase family. MiaB subfamily. Monomer. The cofactor is [4Fe-4S] cluster.

Its subcellular location is the cytoplasm. It carries out the reaction N(6)-dimethylallyladenosine(37) in tRNA + (sulfur carrier)-SH + AH2 + 2 S-adenosyl-L-methionine = 2-methylsulfanyl-N(6)-dimethylallyladenosine(37) in tRNA + (sulfur carrier)-H + 5'-deoxyadenosine + L-methionine + A + S-adenosyl-L-homocysteine + 2 H(+). Catalyzes the methylthiolation of N6-(dimethylallyl)adenosine (i(6)A), leading to the formation of 2-methylthio-N6-(dimethylallyl)adenosine (ms(2)i(6)A) at position 37 in tRNAs that read codons beginning with uridine. This chain is tRNA-2-methylthio-N(6)-dimethylallyladenosine synthase, found in Shewanella putrefaciens (strain CN-32 / ATCC BAA-453).